The primary structure comprises 307 residues: Taste receptor type 2 member 41 (307 aa).

Residues 1 to 7 (MQAALTA) lie on the Extracellular side of the membrane. A helical transmembrane segment spans residues 8 to 28 (FFMLLFSLLSLLGIAANGFIV). The Cytoplasmic portion of the chain corresponds to 29-40 (LVLGREWLRYGR). The helical transmembrane segment at 41 to 61 (LLPLDMILISLGASRFCLQLV) threads the bilayer. Over 62 to 88 (GTVHNFYYSAQKVEYSGGLGRQFFHLH) the chain is Extracellular. The helical transmembrane segment at 89–109 (WHFLNSATFWFCSWLSVLFCV) threads the bilayer. The Cytoplasmic segment spans residues 110 to 129 (KIANITHPTFLWLKWRFPGW). Residues 130–150 (VPWLLLGSVLISFIITLLFFW) traverse the membrane as a helical segment. Over 151–183 (VNYPAYQEFLIRKFSVNMTYKWNTRIETYYFPS) the chain is Extracellular. Residue N167 is glycosylated (N-linked (GlcNAc...) asparagine). Residues 184 to 204 (LKLVIWSIPFSVFLVSIMLLI) traverse the membrane as a helical segment. At 205-234 (NSLRRHTQRMQHNGHSLQDPSTQAHTRALK) the chain is on the cytoplasmic side. A helical transmembrane segment spans residues 235–255 (SLISFLILYALSFLSLIIDAT). The Extracellular portion of the chain corresponds to 256-264 (KFISMQNDF). A helical membrane pass occupies residues 265–285 (YWPWQIAVYLCISVHPFILIF). Over 286–307 (SNLKLRSVFSQLLLLARGFWVA) the chain is Cytoplasmic.

This sequence belongs to the G-protein coupled receptor T2R family.

It is found in the membrane. Functionally, receptor that may play a role in the perception of bitterness and is gustducin-linked. May play a role in sensing the chemical composition of the gastrointestinal content. The activity of this receptor may stimulate alpha gustducin, mediate PLC-beta-2 activation and lead to the gating of TRPM5. The protein is Taste receptor type 2 member 41 (TAS2R41) of Pan troglodytes (Chimpanzee).